The primary structure comprises 47 residues: Large ribosomal subunit protein bL34 (47 aa).

This sequence belongs to the bacterial ribosomal protein bL34 family.

The chain is Large ribosomal subunit protein bL34 (rpmH) from Mycobacterium leprae (strain TN).